The primary structure comprises 704 residues: MNASNLLVELFVEELPPKALQKLGDAFAGVLFEQLKAQGLLASSEARLTAYASPRRLAAHITEVLPQAEDKAVSQKLMPVSVGLDADGKPTPALIKKLAALGAGEEAVAGLTRQGEGKAEALFHSSTVRGVMLADGVQKALDEAIAKLPIPKVMRYQLADGWSSVHFVRPAHGLVVLHGTEVLIGVKALGLTAGTATHGHRFEAAVDPVVIRSADDYAAQLREEGAVIASFAERRAEIARQLQAAAERLGGGVRPIEDEALLDEVTALVERPNVLVCEFEKEFLDVPQECLILTMKANQKYFPLLDAAGKLTHQFLVVSNISPQDASAVIGGNERVVRPRLADAKFFFDQDRKKTLASRVEGLGKVVYHNKLGTQGERVERVRSIAKSIARQLGDTGLAQQADLAAQLAKTDLVTDMVGEFPELQGTMGRYYALNDGLDVAVADAIEDHYKPRFAGDELPRGNAGVVVALADKLETLVGMFGIGNLPTGDRDPFALRRHALGVIRMLVEKDLALDLETLLVSVLPAFGDKIEDATPQLADFIYDRLAGNLREQGFSAQEVDSVLALRPQRLSDVQKRLEAVRAFGELPEAPALAAANKRVGNILKKADQAVQAQVDAAVLAEVAEKDLYAALQSVAPKAQQQFAAGDYTASLQTLAALRAPVDAFFEHVMVNAEDPALKANRLGLLATLHEAMNRVADLSRLAA.

Belongs to the class-II aminoacyl-tRNA synthetase family. As to quaternary structure, tetramer of two alpha and two beta subunits.

The protein localises to the cytoplasm. It catalyses the reaction tRNA(Gly) + glycine + ATP = glycyl-tRNA(Gly) + AMP + diphosphate. The protein is Glycine--tRNA ligase beta subunit of Delftia acidovorans (strain DSM 14801 / SPH-1).